A 200-amino-acid polypeptide reads, in one-letter code: Troponin I-like protein (200 aa).

Disordered regions lie at residues 1-20 (MGDE…AEVR) and 181-200 (ENKA…ENEE). Residues 2–116 (GDEEKRKMEE…EDAKYDLEYE (115 aa)) adopt a coiled-coil conformation.

The protein belongs to the troponin I family. As to expression, expressed in salivary gland, gut, muscle and cuticle (at protein level).

Its function is as follows. Inhibits endothelial cell proliferation and angiogenesis in a vertebrate host. Probably required for efficient blood feeding on vertebrate hosts. This is Troponin I-like protein from Haemaphysalis longicornis (Bush tick).